We begin with the raw amino-acid sequence, 231 residues long: Cysteine-rich venom protein VAR10 (231 aa).

Residues methionine 1 to glycine 19 form the signal peptide. In terms of domain architecture, SCP spans asparagine 41 to tyrosine 169. 5 disulfide bridges follow: cysteine 77–cysteine 156, cysteine 95–cysteine 170, cysteine 151–cysteine 167, cysteine 189–cysteine 196, and cysteine 214–cysteine 231. In terms of domain architecture, ShKT spans cysteine 205 to cysteine 231.

This sequence belongs to the CRISP family. In terms of processing, contains 8 disulfide bonds. In terms of tissue distribution, expressed by the venom gland.

The protein localises to the secreted. Functionally, blocks ryanodine receptors, and potassium channels. The protein is Cysteine-rich venom protein VAR10 of Varanus varius (Lace monitor lizard).